Reading from the N-terminus, the 353-residue chain is UPF0283 membrane protein YcjF (353 aa).

Over residues 1-19 the composition is skewed to basic and acidic residues; the sequence is MSEPLKPRIDFAEPLKEEP. The interval 1–48 is disordered; sequence MSEPLKPRIDFAEPLKEEPTSAFKAQQTFSEAESHTFAPAAIDERPED. Residues 1–69 lie on the Periplasmic side of the membrane; sequence MSEPLKPRID…LRPKRSLWRK (69 aa). A helical transmembrane segment spans residues 70 to 90; that stretch reads MVMGGLALFGASVVGQGVQWT. Topologically, residues 91–99 are cytoplasmic; sequence MNAWQTQDW. Residues 100 to 120 traverse the membrane as a helical segment; sequence VALGGCAAGALIVGAGVGSVV. The Periplasmic portion of the chain corresponds to 121–212; the sequence is TEWWRLWRLR…ARREISRFAA (92 aa). Residues 213 to 233 traverse the membrane as a helical segment; sequence ESTLMIAVSPLALVDMAFIAW. Topologically, residues 234 to 353 are cytoplasmic; sequence RNLRLINRIA…LQKSKSSPEK (120 aa).

It belongs to the UPF0283 family.

It localises to the cell inner membrane. The chain is UPF0283 membrane protein YcjF (ycjF) from Salmonella typhi.